We begin with the raw amino-acid sequence, 397 residues long: Putative F-box protein At2g04810 (397 aa).

The 49-residue stretch at 20 to 68 (SDWSKLCPDVLRKIYETLRSPVDSHRAKIVCSNWYSVWKTCVKRPLCPL) folds into the F-box domain.

The protein is Putative F-box protein At2g04810 of Arabidopsis thaliana (Mouse-ear cress).